The primary structure comprises 283 residues: tRNA-cytidine(32) 2-sulfurtransferase (283 aa).

The PP-loop motif motif lies at 37–42; the sequence is SGGKDS. Residues Cys-112, Cys-115, and Cys-203 each contribute to the [4Fe-4S] cluster site.

This sequence belongs to the TtcA family. In terms of assembly, homodimer. Mg(2+) is required as a cofactor. It depends on [4Fe-4S] cluster as a cofactor.

The protein localises to the cytoplasm. The enzyme catalyses cytidine(32) in tRNA + S-sulfanyl-L-cysteinyl-[cysteine desulfurase] + AH2 + ATP = 2-thiocytidine(32) in tRNA + L-cysteinyl-[cysteine desulfurase] + A + AMP + diphosphate + H(+). Its pathway is tRNA modification. Its function is as follows. Catalyzes the ATP-dependent 2-thiolation of cytidine in position 32 of tRNA, to form 2-thiocytidine (s(2)C32). The sulfur atoms are provided by the cysteine/cysteine desulfurase (IscS) system. The polypeptide is tRNA-cytidine(32) 2-sulfurtransferase (Legionella pneumophila (strain Paris)).